A 548-amino-acid polypeptide reads, in one-letter code: Chaperonin GroEL (548 aa).

ATP is bound by residues 30 to 33, lysine 51, 87 to 91, glycine 415, and aspartate 495; these read TLGP and DGTTT.

It belongs to the chaperonin (HSP60) family. Forms a cylinder of 14 subunits composed of two heptameric rings stacked back-to-back. Interacts with the co-chaperonin GroES.

It is found in the cytoplasm. The catalysed reaction is ATP + H2O + a folded polypeptide = ADP + phosphate + an unfolded polypeptide.. Functionally, together with its co-chaperonin GroES, plays an essential role in assisting protein folding. The GroEL-GroES system forms a nano-cage that allows encapsulation of the non-native substrate proteins and provides a physical environment optimized to promote and accelerate protein folding. The sequence is that of Chaperonin GroEL from Colwellia psychrerythraea (strain 34H / ATCC BAA-681) (Vibrio psychroerythus).